A 216-amino-acid chain; its full sequence is Endoplasmic reticulum vesicle protein 25 (216 aa).

Positions 1-25 (MGSSRLAMRSALGLFFLLFVQISLA) are cleaved as a signal peptide. Over 26–185 (LKFDIAAGKG…TNESTNERVK (160 aa)) the chain is Lumenal. Positions 36–126 (ERCIRNFVLK…HRSIELDVDI (91 aa)) constitute a GOLD domain. Residues 186–206 (WFAFGTMGMLVGLGVWQVIYL) traverse the membrane as a helical segment. Over 207–216 (RAYFRSKHLI) the chain is Cytoplasmic.

This sequence belongs to the EMP24/GP25L family.

The protein localises to the endoplasmic reticulum membrane. It is found in the golgi apparatus membrane. Constituent of COPII-coated endoplasmic reticulum-derived transport vesicles. Required for efficient transport of a subset of secretory proteins to the Golgi. Facilitates retrograde transport from the Golgi to the endoplasmic reticulum. This is Endoplasmic reticulum vesicle protein 25 (erv25) from Emericella nidulans (strain FGSC A4 / ATCC 38163 / CBS 112.46 / NRRL 194 / M139) (Aspergillus nidulans).